We begin with the raw amino-acid sequence, 419 residues long: 3-isopropylmalate dehydratase large subunit (419 aa).

[4Fe-4S] cluster is bound by residues Cys302, Cys362, and Cys365.

The protein belongs to the aconitase/IPM isomerase family. LeuC type 2 subfamily. As to quaternary structure, heterodimer of LeuC and LeuD. The cofactor is [4Fe-4S] cluster.

It carries out the reaction (2R,3S)-3-isopropylmalate = (2S)-2-isopropylmalate. It participates in amino-acid biosynthesis; L-leucine biosynthesis; L-leucine from 3-methyl-2-oxobutanoate: step 2/4. Catalyzes the isomerization between 2-isopropylmalate and 3-isopropylmalate, via the formation of 2-isopropylmaleate. In Sulfurimonas denitrificans (strain ATCC 33889 / DSM 1251) (Thiomicrospira denitrificans (strain ATCC 33889 / DSM 1251)), this protein is 3-isopropylmalate dehydratase large subunit.